A 448-amino-acid chain; its full sequence is Phosphohexose mutases (448 aa).

Ser-97 (phosphoserine intermediate) is an active-site residue. Mg(2+)-binding residues include Ser-97, Asp-237, Asp-239, and Asp-241.

Belongs to the phosphohexose mutase family. The cofactor is Mg(2+).

It carries out the reaction alpha-D-glucose 1-phosphate = alpha-D-glucose 6-phosphate. The enzyme catalyses alpha-D-mannose 1-phosphate = D-mannose 6-phosphate. The protein operates within nucleotide-sugar biosynthesis; GDP-alpha-D-mannose biosynthesis; alpha-D-mannose 1-phosphate from D-fructose 6-phosphate: step 2/2. Its function is as follows. Involved in xanthan production. The sequence is that of Phosphohexose mutases (xanA) from Xanthomonas campestris pv. campestris (strain ATCC 33913 / DSM 3586 / NCPPB 528 / LMG 568 / P 25).